The sequence spans 903 residues: Disintegrin and metalloproteinase domain-containing protein 12 (903 aa).

Residues 1–31 (MAERPARRAPPARALLLALAGALLAPRAARG) form the signal peptide. Positions 32-205 (MSLWDQRGTY…SQMRARRHKR (174 aa)) are excised as a propeptide. 3 N-linked (GlcNAc...) asparagine glycosylation sites follow: N112, N147, and N157. A Cysteine switch motif is present at residues 175-182 (GLCGSQHN). C177 contributes to the Zn(2+) binding site. N-linked (GlcNAc...) asparagine glycans are attached at residues N182 and N185. Over 206-706 (ETLKMTKYVE…GPIRQADNQG (501 aa)) the chain is Extracellular. The Peptidase M12B domain occupies 212-414 (KYVELVIVAD…GMGMCLFNLP (203 aa)). 3 disulfide bridges follow: C323-C409, C365-C393, and C367-C376. Position 348 (H348) interacts with Zn(2+). E349 is a catalytic residue. Zn(2+) is bound by residues H352 and H358. Residues 422 to 508 (GRKCGNGYVE…HCPANVYLHD (87 aa)) form the Disintegrin domain. An N-linked (GlcNAc...) asparagine glycan is attached at N450. C480 and C500 are oxidised to a cystine. N-linked (GlcNAc...) asparagine glycosylation is present at N649. The 33-residue stretch at 654–686 (GVHKCAMQCHGRGVCNNRKNCHCEAHWAPPFCD) folds into the EGF-like domain. 3 cysteine pairs are disulfide-bonded: C658-C668, C662-C674, and C676-C685. A helical transmembrane segment spans residues 707–727 (LTVGILVSILCLLAAGFVVYL). Over 728–903 (KRKTLMRLLF…PRPSHNAYIK (176 aa)) the chain is Cytoplasmic. Disordered regions lie at residues 753–790 (SRTP…HSLK) and 819–903 (HQTP…AYIK). 2 consecutive short sequence motifs (SH3-binding; class II) follow at residues 824 to 830 (APSGPAR) and 846 to 852 (KPSPPQK). 3 consecutive short sequence motifs (SH3-binding; class I) follow at residues 830–837 (RPLPASPA), 852–858 (KPLPADP), and 881–887 (RPAPIRP). Over residues 847-856 (PSPPQKPLPA) the composition is skewed to pro residues. A Phosphotyrosine; by SRC modification is found at Y901.

As to quaternary structure, interacts with alpha-actinin-2 and with syndecans. Interacts with SH3PXD2A. Interacts with FST3. Interacts with RACK1; the interaction is required for PKC-dependent translocation of ADAM12 to the cell membrane. The cofactor is Zn(2+). Post-translationally, the precursor is cleaved by a furin endopeptidase. In terms of tissue distribution, expressed during early developing mesenchymal cells that give rise to skeletal muscle, bones and visceral organs. Not expressed in adult normal muscle but expressed in regenerating muscle.

Its subcellular location is the membrane. In terms of biological role, involved in skeletal muscle regeneration, specifically at the onset of cell fusion. Also involved in macrophage-derived giant cells (MGC) and osteoclast formation from mononuclear precursors. This is Disintegrin and metalloproteinase domain-containing protein 12 (Adam12) from Mus musculus (Mouse).